A 65-amino-acid polypeptide reads, in one-letter code: Large ribosomal subunit protein bL35 (65 aa).

The protein belongs to the bacterial ribosomal protein bL35 family.

The sequence is that of Large ribosomal subunit protein bL35 from Stenotrophomonas maltophilia (strain R551-3).